Consider the following 116-residue polypeptide: Protein Rev (116 aa).

Phosphoserine; by host CK2 occurs at positions 5 and 8. Residues 18–26 (LIKFLYQSN) are homomultimerization. A disordered region spans residues 25–49 (SNPPPSLEGTRQARRNRRRRWRERQ). The short motif at 34–50 (TRQARRNRRRRWRERQR) is the Nuclear localization signal and RNA-binding (RRE) element. The segment covering 36-47 (QARRNRRRRWRE) has biased composition (basic residues). The short motif at 73-84 (LPLPPLEKLTLD) is the Nuclear export signal and binding to XPO1 element. Phosphoserine; by host occurs at positions 92 and 99. The segment at 92–116 (SGTQGVGSPQILVESPAILEPGTKE) is disordered.

Belongs to the HIV-1 REV protein family. As to quaternary structure, homomultimer; when bound to the RRE. Multimeric assembly is essential for activity and may involve XPO1. Binds to human KPNB1, XPO1, TNPO1, RANBP5 and IPO7. Interacts with the viral Integrase. Interacts with human KHDRBS1. Interacts with human NAP1; this interaction decreases Rev multimerization and stimulates its activity. Interacts with human DEAD-box helicases DDX3 and DDX24; these interactions may serve for viral RNA export to the cytoplasm and packaging, respectively. Interacts with human PSIP1; this interaction may inhibit HIV-1 DNA integration by promoting dissociation of the Integrase-LEDGF/p75 complex. Asymmetrically arginine dimethylated at one site by host PRMT6. Methylation impairs the RNA-binding activity and export of viral RNA from the nucleus to the cytoplasm. In terms of processing, phosphorylated by protein kinase CK2. Presence of, and maybe binding to the N-terminus of the regulatory beta subunit of CK2 is necessary for CK2-mediated Rev's phosphorylation.

It is found in the host nucleus. Its subcellular location is the host nucleolus. It localises to the host cytoplasm. Its function is as follows. Escorts unspliced or incompletely spliced viral pre-mRNAs (late transcripts) out of the nucleus of infected cells. These pre-mRNAs carry a recognition sequence called Rev responsive element (RRE) located in the env gene, that is not present in fully spliced viral mRNAs (early transcripts). This function is essential since most viral proteins are translated from unspliced or partially spliced pre-mRNAs which cannot exit the nucleus by the pathway used by fully processed cellular mRNAs. Rev itself is translated from a fully spliced mRNA that readily exits the nucleus. Rev's nuclear localization signal (NLS) binds directly to KPNB1/Importin beta-1 without previous binding to KPNA1/Importin alpha-1. KPNB1 binds to the GDP bound form of RAN (Ran-GDP) and targets Rev to the nucleus. In the nucleus, the conversion from Ran-GDP to Ran-GTP dissociates Rev from KPNB1 and allows Rev's binding to the RRE in viral pre-mRNAs. Rev multimerization on the RRE via cooperative assembly exposes its nuclear export signal (NES) to the surface. Rev can then form a complex with XPO1/CRM1 and Ran-GTP, leading to nuclear export of the complex. Conversion from Ran-GTP to Ran-GDP mediates dissociation of the Rev/RRE/XPO1/RAN complex, so that Rev can return to the nucleus for a subsequent round of export. Beside KPNB1, also seems to interact with TNPO1/Transportin-1, RANBP5/IPO5 and IPO7/RANBP7 for nuclear import. The nucleoporin-like HRB/RIP is an essential cofactor that probably indirectly interacts with Rev to release HIV RNAs from the perinuclear region to the cytoplasm. This chain is Protein Rev, found in Human immunodeficiency virus type 1 group M subtype B (strain 89.6) (HIV-1).